The following is a 151-amino-acid chain: UPF0208 membrane protein Spro_3315 (151 aa).

2 consecutive transmembrane segments (helical) span residues 46 to 64 (FAVR…WQIA) and 70 to 90 (GPAI…LWWL).

It belongs to the UPF0208 family.

It localises to the cell inner membrane. This is UPF0208 membrane protein Spro_3315 from Serratia proteamaculans (strain 568).